The following is a 246-amino-acid chain: Bis(5'-nucleosyl)-tetraphosphatase PrpE [asymmetrical] (246 aa).

Belongs to the PrpE family. Ni(2+) is required as a cofactor.

The enzyme catalyses P(1),P(4)-bis(5'-guanosyl) tetraphosphate + H2O = GMP + GTP + 2 H(+). Its function is as follows. Asymmetrically hydrolyzes Ap4p to yield AMP and ATP. The protein is Bis(5'-nucleosyl)-tetraphosphatase PrpE [asymmetrical] of Bacillus cereus (strain 03BB102).